The following is a 3993-amino-acid chain: Intermembrane lipid transfer protein VPS13B (3993 aa).

The Chorein N-terminal domain maps to 2–102; that stretch reads LESYVTPILM…KDGIQDDHES (101 aa). Residues 100–133 are disordered; the sequence is HESCGSNSTNRSTAENTKSSIKPRRIQQAAPADP. A compositionally biased stretch (polar residues) spans 103 to 119; the sequence is CGSNSTNRSTAENTKSS. A phosphoserine mark is found at Ser-413, Ser-998, Ser-1001, and Ser-1032. Disordered stretches follow at residues 1262 to 1303, 1616 to 1637, and 1735 to 1770; these read SPVW…PFSD, DQLK…ERNS, and TKAT…DSGI. Residues 1264 to 1291 show a composition bias toward polar residues; it reads VWSSVGTAPPDTSTCSPSADIGTTTEGD. Over residues 1739 to 1750 the composition is skewed to basic and acidic residues; the sequence is EISKQEQKKVDT. A compositionally biased stretch (polar residues) spans 1756 to 1770; the sequence is AETSSRYSGAQDSGI. At Ser-1789 the chain carries Phosphoserine. Residues 2048–2067 are disordered; that stretch reads HSSAHSKETSTPSDSILNMD. The 80-residue stretch at 2604–2683 folds into the SHR-BD domain; it reads HFVICNDTQE…TIQYKGRTAS (80 aa). Positions 3880–3993 are localizes the protein to the Golgi apparatus; sequence AFPITEISCA…KNKALRKGFS (114 aa).

It belongs to the VPS13 family. Interacts with STX6. Interacts with STX12 (via N-terminus). Interacts with RAB6A isoform 1 (GTP-bound) and isoform 2 (GTP-bound). Interacts with RAB6B (GTP-bound). In terms of tissue distribution, ubiquitously expressed in all examined tissues.

It is found in the recycling endosome membrane. It localises to the cytoplasmic vesicle. The protein resides in the secretory vesicle. The protein localises to the acrosome membrane. Its subcellular location is the golgi apparatus. It is found in the cis-Golgi network membrane. It localises to the endoplasmic reticulum-Golgi intermediate compartment membrane. The protein resides in the trans-Golgi network membrane. The protein localises to the early endosome membrane. Its subcellular location is the lysosome membrane. Functionally, mediates the transfer of lipids between membranes at organelle contact sites. Binds phosphatidylinositol 3-phosphate. Functions as a tethering factor in the slow endocytic recycling pathway, to assist traffic between early and recycling endosomes. Involved in the transport of proacrosomal vesicles to the nuclear dense lamina (NDL) during spermatid development. Plays a role in the assembly of the Golgi apparatus, possibly by mediating trafficking to the Golgi membrane. Plays a role in the development of the nervous system, and may be required for neuron projection development. May also play a role during adipose tissue development. Required for maintenance of the ocular lens. Required for proper organization of the Golgi. The sequence is that of Intermembrane lipid transfer protein VPS13B from Mus musculus (Mouse).